A 558-amino-acid polypeptide reads, in one-letter code: Membrane protein insertase YidC (558 aa).

The next 5 helical transmembrane spans lie at 3-23 (IKRT…FDNW), 364-384 (FVGN…AVFF), 438-458 (LPVV…LASV), 477-497 (PYFI…KLNP), and 508-528 (MMFM…GLVL).

Belongs to the OXA1/ALB3/YidC family. Type 1 subfamily. Interacts with the Sec translocase complex via SecD. Specifically interacts with transmembrane segments of nascent integral membrane proteins during membrane integration.

The protein localises to the cell inner membrane. Required for the insertion and/or proper folding and/or complex formation of integral membrane proteins into the membrane. Involved in integration of membrane proteins that insert both dependently and independently of the Sec translocase complex, as well as at least some lipoproteins. Aids folding of multispanning membrane proteins. In Burkholderia pseudomallei (strain 668), this protein is Membrane protein insertase YidC.